A 320-amino-acid polypeptide reads, in one-letter code: Aspartate carbamoyltransferase catalytic subunit (320 aa).

Arg-68 and Thr-69 together coordinate carbamoyl phosphate. Lys-96 lines the L-aspartate pocket. Carbamoyl phosphate contacts are provided by Arg-118, His-148, and Gln-151. 2 residues coordinate L-aspartate: Arg-181 and Arg-236. Residues Gly-277 and Pro-278 each coordinate carbamoyl phosphate.

Belongs to the aspartate/ornithine carbamoyltransferase superfamily. ATCase family. In terms of assembly, heterododecamer (2C3:3R2) of six catalytic PyrB chains organized as two trimers (C3), and six regulatory PyrI chains organized as three dimers (R2).

The enzyme catalyses carbamoyl phosphate + L-aspartate = N-carbamoyl-L-aspartate + phosphate + H(+). It participates in pyrimidine metabolism; UMP biosynthesis via de novo pathway; (S)-dihydroorotate from bicarbonate: step 2/3. In terms of biological role, catalyzes the condensation of carbamoyl phosphate and aspartate to form carbamoyl aspartate and inorganic phosphate, the committed step in the de novo pyrimidine nucleotide biosynthesis pathway. The polypeptide is Aspartate carbamoyltransferase catalytic subunit (Variovorax paradoxus (strain S110)).